The following is a 126-amino-acid chain: Glycine cleavage system H protein (126 aa).

Residues 22-104 (TVTIGITEYA…YEKAWMVKVE (83 aa)) form the Lipoyl-binding domain. N6-lipoyllysine is present on K63.

The protein belongs to the GcvH family. In terms of assembly, the glycine cleavage system is composed of four proteins: P, T, L and H. Requires (R)-lipoate as cofactor.

Functionally, the glycine cleavage system catalyzes the degradation of glycine. The H protein shuttles the methylamine group of glycine from the P protein to the T protein. Is also involved in protein lipoylation via its role as an octanoyl/lipoyl carrier protein intermediate. In Staphylococcus haemolyticus (strain JCSC1435), this protein is Glycine cleavage system H protein.